The sequence spans 223 residues: Ribosomal RNA small subunit methyltransferase Nep1 (223 aa).

Residues Gly-181, Gly-186, and Leu-199–Leu-204 each bind S-adenosyl-L-methionine.

Belongs to the class IV-like SAM-binding methyltransferase superfamily. RNA methyltransferase NEP1 family. Homodimer.

The enzyme catalyses a pseudouridine in rRNA + S-adenosyl-L-methionine = an N(1)-methylpseudouridine in rRNA + S-adenosyl-L-homocysteine + H(+). Its function is as follows. Methyltransferase involved in ribosomal biogenesis. Specifically catalyzes the N1-methylation of the pseudouridine corresponding to position 914 in M.jannaschii 16S rRNA. The chain is Ribosomal RNA small subunit methyltransferase Nep1 from Pyrococcus furiosus (strain ATCC 43587 / DSM 3638 / JCM 8422 / Vc1).